The chain runs to 556 residues: Formate--tetrahydrofolate ligase (556 aa).

An ATP-binding site is contributed by 65 to 72; it reads TPAGEGKT.

The protein belongs to the formate--tetrahydrofolate ligase family.

The enzyme catalyses (6S)-5,6,7,8-tetrahydrofolate + formate + ATP = (6R)-10-formyltetrahydrofolate + ADP + phosphate. It participates in one-carbon metabolism; tetrahydrofolate interconversion. In Clostridium acidurici (Gottschalkia acidurici), this protein is Formate--tetrahydrofolate ligase.